The following is a 357-amino-acid chain: NmrA-like family domain-containing oxidoreductase notA' (357 aa).

NADP(+)-binding positions include 13–18, 39–43, 60–61, 81–83, Lys-140, and 164–167; these read GATGAQ, RKPES, DG, TNS, and YMDV.

Belongs to the NmrA-type oxidoreductase family.

Its function is as follows. NmrA-like family domain-containing oxidoreductase; part of the gene cluster that mediates the biosynthesis of notoamide, a fungal indole alkaloid that belongs to a family of natural products containing a characteristic bicyclo[2.2.2]diazaoctane core. The first step of notoamide biosynthesis involves coupling of L-proline and L-tryptophan by the bimodular NRPS notE', to produce cyclo-L-tryptophan-L-proline called brevianamide F. The reverse prenyltransferase notF' then acts as a deoxybrevianamide E synthase and converts brevianamide F to deoxybrevianamide E via reverse prenylation at C-2 of the indole ring leading to the bicyclo[2.2.2]diazaoctane core. Deoxybrevianamide E is further hydroxylated at C-6 of the indole ring, likely catalyzed by the cytochrome P450 monooxygenase notG', to yield 6-hydroxy-deoxybrevianamide E. 6-hydroxy-deoxybrevianamide E is a specific substrate of the prenyltransferase notC' for normal prenylation at C-7 to produce 6-hydroxy-7-prenyl-deoxybrevianamide, also called notoamide S. As the proposed pivotal branching point in notoamide biosynthesis, notoamide S can be diverted to notoamide E through an oxidative pyran ring closure putatively catalyzed by either notH' cytochrome P450 monooxygenase or the notD' FAD-linked oxidoreductase. This step would be followed by an indole 2,3-epoxidation-initiated pinacol-like rearrangement catalyzed by the notB' FAD-dependent monooxygenase leading to the formation of notoamide C and notoamide D. On the other hand notoamide S is converted to notoamide T by notH' (or notD'), a bifunctional oxidase that also functions as the intramolecular Diels-Alderase responsible for generation of (-)-notoamide T. To generate antipodal (+)-notoaminide T, notH (or notD) in Aspergillus strain MF297-2 is expected to catalyze a Diels-Alder reaction leading to the opposite stereochemistry. The remaining oxidoreductase notD' (or notH') likely catalyzes the oxidative pyran ring formation to yield (-)-stephacidin A. The FAD-dependent monooxygenase notI' is highly similar to notB' and is predicted to catalyze a similar conversion from (-)-stephacidin A to (+)-notoamide B via the 2,3-epoxidation of (-)-stephacidin A followed by a pinacol-type rearrangement. Finally, it remains unclear which enzyme could be responsible for the final hydroxylation steps leading to notoamide A and sclerotiamide. The sequence is that of NmrA-like family domain-containing oxidoreductase notA' from Aspergillus versicolor.